Consider the following 442-residue polypeptide: 3-phosphoshikimate 1-carboxyvinyltransferase (442 aa).

Residues Lys25, Ser26, and Arg30 each coordinate 3-phosphoshikimate. Lys25 contributes to the phosphoenolpyruvate binding site. Phosphoenolpyruvate-binding residues include Gly96 and Arg124. 3-phosphoshikimate-binding residues include Ser171, Ser172, Gln173, Ser203, Asp325, and Lys352. Gln173 lines the phosphoenolpyruvate pocket. The active-site Proton acceptor is Asp325. Phosphoenolpyruvate contacts are provided by Arg356, Arg400, and Lys425.

This sequence belongs to the EPSP synthase family. Monomer.

The protein localises to the cytoplasm. The enzyme catalyses 3-phosphoshikimate + phosphoenolpyruvate = 5-O-(1-carboxyvinyl)-3-phosphoshikimate + phosphate. It functions in the pathway metabolic intermediate biosynthesis; chorismate biosynthesis; chorismate from D-erythrose 4-phosphate and phosphoenolpyruvate: step 6/7. Functionally, catalyzes the transfer of the enolpyruvyl moiety of phosphoenolpyruvate (PEP) to the 5-hydroxyl of shikimate-3-phosphate (S3P) to produce enolpyruvyl shikimate-3-phosphate and inorganic phosphate. This is 3-phosphoshikimate 1-carboxyvinyltransferase from Bordetella bronchiseptica (strain ATCC BAA-588 / NCTC 13252 / RB50) (Alcaligenes bronchisepticus).